Reading from the N-terminus, the 255-residue chain is Thiazole synthase (255 aa).

The Schiff-base intermediate with DXP role is filled by Lys96. Residues Gly157, 184–185, and 206–207 contribute to the 1-deoxy-D-xylulose 5-phosphate site; these read AG and NT.

Belongs to the ThiG family. Homotetramer. Forms heterodimers with either ThiH or ThiS.

The protein resides in the cytoplasm. It catalyses the reaction [ThiS sulfur-carrier protein]-C-terminal-Gly-aminoethanethioate + 2-iminoacetate + 1-deoxy-D-xylulose 5-phosphate = [ThiS sulfur-carrier protein]-C-terminal Gly-Gly + 2-[(2R,5Z)-2-carboxy-4-methylthiazol-5(2H)-ylidene]ethyl phosphate + 2 H2O + H(+). The protein operates within cofactor biosynthesis; thiamine diphosphate biosynthesis. Functionally, catalyzes the rearrangement of 1-deoxy-D-xylulose 5-phosphate (DXP) to produce the thiazole phosphate moiety of thiamine. Sulfur is provided by the thiocarboxylate moiety of the carrier protein ThiS. In vitro, sulfur can be provided by H(2)S. The polypeptide is Thiazole synthase (Clostridium acetobutylicum (strain ATCC 824 / DSM 792 / JCM 1419 / IAM 19013 / LMG 5710 / NBRC 13948 / NRRL B-527 / VKM B-1787 / 2291 / W)).